The following is a 562-amino-acid chain: Probable sesquiterpene synthase (562 aa).

3 residues coordinate Mg(2+): Asp-315, Asp-319, and Glu-467. Residues 315–319 (DDIYD) carry the DDXXD motif motif.

This sequence belongs to the terpene synthase family. Tpsa subfamily. Mg(2+) is required as a cofactor. The cofactor is Mn(2+).

Sesquiterpene synthase. The sequence is that of Probable sesquiterpene synthase (SesquiTPS) from Santalum austrocaledonicum (Sandalwood).